Reading from the N-terminus, the 489-residue chain is ATP synthase subunit beta 1 (489 aa).

159-166 lines the ATP pocket; it reads GGAGVGKT. The segment covering 465-477 has biased composition (basic and acidic residues); that stretch reads EKSKKAAEDKPKA. The interval 465–489 is disordered; the sequence is EKSKKAAEDKPKAEEDEDATSLHDA.

This sequence belongs to the ATPase alpha/beta chains family. As to quaternary structure, F-type ATPases have 2 components, CF(1) - the catalytic core - and CF(0) - the membrane proton channel. CF(1) has five subunits: alpha(3), beta(3), gamma(1), delta(1), epsilon(1). CF(0) has three main subunits: a(1), b(2) and c(9-12). The alpha and beta chains form an alternating ring which encloses part of the gamma chain. CF(1) is attached to CF(0) by a central stalk formed by the gamma and epsilon chains, while a peripheral stalk is formed by the delta and b chains.

The protein localises to the cell inner membrane. It carries out the reaction ATP + H2O + 4 H(+)(in) = ADP + phosphate + 5 H(+)(out). Its function is as follows. Produces ATP from ADP in the presence of a proton gradient across the membrane. The catalytic sites are hosted primarily by the beta subunits. This is ATP synthase subunit beta 1 from Marinomonas sp. (strain MWYL1).